An 87-amino-acid chain; its full sequence is Small ribosomal subunit protein bS20 (87 aa).

This sequence belongs to the bacterial ribosomal protein bS20 family.

Binds directly to 16S ribosomal RNA. This chain is Small ribosomal subunit protein bS20, found in Corynebacterium diphtheriae (strain ATCC 700971 / NCTC 13129 / Biotype gravis).